The primary structure comprises 272 residues: Type II secretion system protein C (272 aa).

Topologically, residues 1–16 (MNISKLPPLSPSVIRR) are cytoplasmic. The helical transmembrane segment at 17–35 (ILFYLLMLLFCQQLAMIFW) threads the bilayer. Residues 36-272 (RVGLPDNSPV…DIYMEFGGDE (237 aa)) lie on the Periplasmic side of the membrane.

This sequence belongs to the GSP C family.

The protein localises to the cell inner membrane. Its function is as follows. Involved in a type II secretion system (T2SS, formerly general secretion pathway, GSP) for the export of proteins. Required for the translocation of the multiple pectic enzymes. In Dickeya chrysanthemi (Pectobacterium chrysanthemi), this protein is Type II secretion system protein C (outC).